Here is a 426-residue protein sequence, read N- to C-terminus: D-tagatose-1,6-bisphosphate aldolase subunit KbaZ (426 aa).

It belongs to the GatZ/KbaZ family. KbaZ subfamily. As to quaternary structure, forms a complex with KbaY.

It participates in carbohydrate metabolism; D-tagatose 6-phosphate degradation; D-glyceraldehyde 3-phosphate and glycerone phosphate from D-tagatose 6-phosphate: step 2/2. Its function is as follows. Component of the tagatose-1,6-bisphosphate aldolase KbaYZ that is required for full activity and stability of the Y subunit. Could have a chaperone-like function for the proper and stable folding of KbaY. When expressed alone, KbaZ does not show any aldolase activity. The protein is D-tagatose-1,6-bisphosphate aldolase subunit KbaZ of Escherichia coli O139:H28 (strain E24377A / ETEC).